The primary structure comprises 87 residues: Large ribosomal subunit protein bL27 (87 aa).

The disordered stretch occupies residues 1 to 25; it reads MAHKKGASSSRNGRDSNAQRLGVKR. The segment covering 7-19 has biased composition (polar residues); it reads ASSSRNGRDSNAQ.

The protein belongs to the bacterial ribosomal protein bL27 family.

In Rhodococcus opacus (strain B4), this protein is Large ribosomal subunit protein bL27.